The chain runs to 1108 residues: Alpha-mannosidase 2 (1108 aa).

Residues 1-9 (MLRIRRRFA) lie on the Cytoplasmic side of the membrane. The helical; Signal-anchor for type II membrane protein transmembrane segment at 10–30 (LVICSGCLLVFLSLYIILNFA) threads the bilayer. Residues 31–1108 (APAATQIKPN…TAAYVSSHSS (1078 aa)) lie on the Lumenal side of the membrane. The tract at residues 70 to 92 (AETSNRDDPIRPPLKVARSPRPG) is disordered. The Zn(2+) site is built by His153, Asp155, Asp267, and His534. Asp267 functions as the Nucleophile in the catalytic mechanism.

The protein belongs to the glycosyl hydrolase 38 family. Homodimer; disulfide-linked. It depends on Zn(2+) as a cofactor.

It is found in the golgi apparatus membrane. It carries out the reaction N(4)-{beta-D-GlcNAc-(1-&gt;2)-alpha-D-Man-(1-&gt;3)-[alpha-D-Man-(1-&gt;3)-[alpha-D-Man-(1-&gt;6)]-alpha-D-Man-(1-&gt;6)]-beta-D-Man-(1-&gt;4)-beta-D-GlcNAc-(1-&gt;4)-beta-D-GlcNAc}-L-asparaginyl-[protein] + 2 H2O = 2 alpha-D-mannopyranose + an N(4)-{beta-D-GlcNAc-(1-&gt;2)-alpha-D-Man-(1-&gt;3)-[alpha-D-Man-(1-&gt;6)]-beta-D-Man-(1-&gt;4)-beta-D-GlcNAc-(1-&gt;4)-beta-D-GlcNAc}-L-asparaginyl-[protein]. It functions in the pathway protein modification; protein glycosylation. Its function is as follows. Catalyzes the first committed step in the biosynthesis of complex N-glycans. It controls conversion of high mannose to complex N-glycans; the final hydrolytic step in the N-glycan maturation pathway. This chain is Alpha-mannosidase 2, found in Drosophila melanogaster (Fruit fly).